The chain runs to 429 residues: tRNA(Ile2) 2-agmatinylcytidine synthetase TiaS (429 aa).

The disordered stretch occupies residues 403-429 (KPPERPLHPSKSLEPPSTPIHSDTISL).

The protein belongs to the TiaS family.

It is found in the cytoplasm. The enzyme catalyses cytidine(34) in tRNA(Ile2) + agmatine + ATP + H2O = 2-agmatinylcytidine(34) in tRNA(Ile2) + AMP + 2 phosphate + 2 H(+). In terms of biological role, ATP-dependent agmatine transferase that catalyzes the formation of 2-agmatinylcytidine (agm2C) at the wobble position (C34) of tRNA(Ile2), converting the codon specificity from AUG to AUA. The polypeptide is tRNA(Ile2) 2-agmatinylcytidine synthetase TiaS (Hyperthermus butylicus (strain DSM 5456 / JCM 9403 / PLM1-5)).